The sequence spans 378 residues: MAKRDYYEVLGVAKNAGDDEIKKAYRKLAMKYHPDRNPDNKDAEEHFKEVKEAYEMLSDGQKRAAYDQYGHAGVDPNMGGAGAQGFGGFADAFGDIFGDIFGQAAGGAARGGRGGPQVYRGADLRYSMEITLEQAAHGYDTQIRVPSWVSCEVCHGSGAKPGTKPETCPTCHGQGTVRMSQGFFSIQQTCPKCHGTGTYIPEPCVHCHGSGKVKETKTLEVKIPAGIDDGMRIRSAGNGEPGINGGPPGDLYVEIHIKPHSVFERDGDDLHCQMPIPFTTAALGGEIEVPTLAGRASFPVPEGTQSGKTFRLRGKGIKGLRSSIAGDLYVHVQVETPVKLTDNQRDLLKQFEKSLAEGGARHSPQSKSWFDRVKSFFE.

In terms of domain architecture, J spans 5-70 (DYYEVLGVAK…QKRAAYDQYG (66 aa)). Residues 138-216 (GYDTQIRVPS…CHGSGKVKET (79 aa)) form a CR-type zinc finger. Residues Cys-151, Cys-154, Cys-168, Cys-171, Cys-190, Cys-193, Cys-204, and Cys-207 each contribute to the Zn(2+) site. CXXCXGXG motif repeat units follow at residues 151–158 (CEVCHGSG), 168–175 (CPTCHGQG), 190–197 (CPKCHGTG), and 204–211 (CVHCHGSG).

This sequence belongs to the DnaJ family. In terms of assembly, homodimer. Zn(2+) serves as cofactor.

The protein localises to the cytoplasm. Functionally, participates actively in the response to hyperosmotic and heat shock by preventing the aggregation of stress-denatured proteins and by disaggregating proteins, also in an autonomous, DnaK-independent fashion. Unfolded proteins bind initially to DnaJ; upon interaction with the DnaJ-bound protein, DnaK hydrolyzes its bound ATP, resulting in the formation of a stable complex. GrpE releases ADP from DnaK; ATP binding to DnaK triggers the release of the substrate protein, thus completing the reaction cycle. Several rounds of ATP-dependent interactions between DnaJ, DnaK and GrpE are required for fully efficient folding. Also involved, together with DnaK and GrpE, in the DNA replication of plasmids through activation of initiation proteins. This is Chaperone protein DnaJ from Burkholderia lata (strain ATCC 17760 / DSM 23089 / LMG 22485 / NCIMB 9086 / R18194 / 383).